We begin with the raw amino-acid sequence, 541 residues long: Tyrosine-protein kinase Yes (541 aa).

A lipid anchor (N-myristoyl glycine) is attached at Gly2. The S-palmitoyl cysteine; in membrane form moiety is linked to residue Cys3. Tyr32 bears the Phosphotyrosine mark. The SH3 domain occupies 89-150; it reads GGVTIFVALY…PSNYVVPADS (62 aa). Residues 156-253 form the SH2 domain; that stretch reads WYFGKMGRKD…GLCHKLTTVC (98 aa). Residues 275–528 form the Protein kinase domain; the sequence is LRLEVKLGQG…YIQSFLEDYF (254 aa). ATP is bound by residues 281–289 and Lys303; that span reads LGQGCFGEV. A phosphotyrosine mark is found at Tyr334 and Tyr343. Asp394 (proton acceptor) is an active-site residue. Tyr424 carries the post-translational modification Phosphotyrosine; by autocatalysis. Tyr535 is subject to Phosphotyrosine.

Belongs to the protein kinase superfamily. Tyr protein kinase family. SRC subfamily. Interacts with YAP1. Interacts with FASLG. Interacts with CTNND1; this interaction allows YES1-mediated activation of FYN and FER and subsequent phosphorylation of CTNND1. Interacts with CSF1R. Interacts with IL6ST/gp130. Interacts with SCRIB, when YES1 is in a closed conformation; the interaction facilitates YES1 autophosphorylation. Phosphorylated. Phosphorylation by CSK on the C-terminal tail maintains the enzyme in an inactive state. Autophosphorylation at Tyr-424 maintains enzyme activity by blocking CSK-mediated inhibition. Post-translationally, palmitoylation at Cys-3 promotes membrane localization.

The protein localises to the cell membrane. The protein resides in the cytoplasm. It localises to the cytoskeleton. It is found in the microtubule organizing center. Its subcellular location is the centrosome. The protein localises to the cytosol. The protein resides in the cell junction. The enzyme catalyses L-tyrosyl-[protein] + ATP = O-phospho-L-tyrosyl-[protein] + ADP + H(+). Functionally, non-receptor protein tyrosine kinase that is involved in the regulation of cell growth and survival, apoptosis, cell-cell adhesion, cytoskeleton remodeling, and differentiation. Stimulation by receptor tyrosine kinases (RTKs) including EGFR, PDGFR, CSF1R and FGFR leads to recruitment of YES1 to the phosphorylated receptor, and activation and phosphorylation of downstream substrates. Upon EGFR activation, promotes the phosphorylation of PARD3 to favor epithelial tight junction assembly. Participates in the phosphorylation of specific junctional components such as CTNND1 by stimulating the FYN and FER tyrosine kinases at cell-cell contacts. Upon T-cell stimulation by CXCL12, phosphorylates collapsin response mediator protein 2/DPYSL2 and induces T-cell migration. Participates in CD95L/FASLG signaling pathway and mediates AKT-mediated cell migration. Plays a role in cell cycle progression by phosphorylating the cyclin dependent kinase 4/CDK4 thus regulating the G1 phase. Also involved in G2/M progression and cytokinesis. Catalyzes phosphorylation of organic cation transporter OCT2 which induces its transport activity. This is Tyrosine-protein kinase Yes (Yes1) from Mus musculus (Mouse).